A 236-amino-acid polypeptide reads, in one-letter code: SPbeta prophage-derived uncharacterized protein YomV (236 aa).

The protein is SPbeta prophage-derived uncharacterized protein YomV (yomV) of Bacillus subtilis (strain 168).